Here is a 673-residue protein sequence, read N- to C-terminus: Glycine--tRNA ligase beta subunit (673 aa).

This sequence belongs to the class-II aminoacyl-tRNA synthetase family. As to quaternary structure, tetramer of two alpha and two beta subunits.

The protein resides in the cytoplasm. It carries out the reaction tRNA(Gly) + glycine + ATP = glycyl-tRNA(Gly) + AMP + diphosphate. The polypeptide is Glycine--tRNA ligase beta subunit (Lactococcus lactis subsp. lactis (strain IL1403) (Streptococcus lactis)).